Reading from the N-terminus, the 668-residue chain is Ankyrin repeat domain-containing protein OPG023 (668 aa).

ANK repeat units lie at residues 31–64 (FKNN…PLHK), 101–131 (NDFN…DFSV), 135–166 (KHHS…SVIY), 199–231 (YIIS…NPSS), 235–266 (NYCT…NTAY), 277–311 (RGIM…PHGI), 334–368 (NSDV…VVNK), 458–487 (RGET…DVNI), and 491–521 (NGYT…TLDC). A PRANC/F-box-like region spans residues 586–666 (GNTMFSLIFT…PYTIKYKIFE (81 aa)).

The protein belongs to the orthopoxvirus OPG023 family. Interacts (via N-terminus) with host RELA. Interacts (via PRANC/F-box-like domain) with the SKP1 component of the host SCF ubiquitin ligase complex.

Substrate-specific adapter of SKP1-containing E3 ubiquitin-protein ligases which mediate the ubiquitination and subsequent proteasomal degradation of host target proteins. Prevents activation and subsequent nuclear localization of NF-kappa-B in infected cells, by targeting NF-kappa-B RELA subunit to the SCF E3 ligase complex. In Bos taurus (Bovine), this protein is Ankyrin repeat domain-containing protein OPG023 (OPG023).